Reading from the N-terminus, the 174-residue chain is Crossover junction endodeoxyribonuclease RuvC (174 aa).

Residues Asp-8, Glu-67, and Asp-139 contribute to the active site. The Mg(2+) site is built by Asp-8, Glu-67, and Asp-139.

This sequence belongs to the RuvC family. Homodimer which binds Holliday junction (HJ) DNA. The HJ becomes 2-fold symmetrical on binding to RuvC with unstacked arms; it has a different conformation from HJ DNA in complex with RuvA. In the full resolvosome a probable DNA-RuvA(4)-RuvB(12)-RuvC(2) complex forms which resolves the HJ. The cofactor is Mg(2+).

The protein localises to the cytoplasm. The catalysed reaction is Endonucleolytic cleavage at a junction such as a reciprocal single-stranded crossover between two homologous DNA duplexes (Holliday junction).. Its function is as follows. The RuvA-RuvB-RuvC complex processes Holliday junction (HJ) DNA during genetic recombination and DNA repair. Endonuclease that resolves HJ intermediates. Cleaves cruciform DNA by making single-stranded nicks across the HJ at symmetrical positions within the homologous arms, yielding a 5'-phosphate and a 3'-hydroxyl group; requires a central core of homology in the junction. The consensus cleavage sequence is 5'-(A/T)TT(C/G)-3'. Cleavage occurs on the 3'-side of the TT dinucleotide at the point of strand exchange. HJ branch migration catalyzed by RuvA-RuvB allows RuvC to scan DNA until it finds its consensus sequence, where it cleaves and resolves the cruciform DNA. This Pseudomonas putida (strain ATCC 700007 / DSM 6899 / JCM 31910 / BCRC 17059 / LMG 24140 / F1) protein is Crossover junction endodeoxyribonuclease RuvC.